A 266-amino-acid polypeptide reads, in one-letter code: Syntaxin-71 (266 aa).

The Cytoplasmic portion of the chain corresponds to 1 to 243 (MTVIDILTRV…TVNQLRSSRN (243 aa)). Ser12 is subject to Phosphoserine. Residues 44 to 87 (ETQIETALEKAELVTKEKNRAAAVAMNAEIRRTKARLSEEVPKL) are a coiled coil. Residues 122 to 146 (DGTAGGPKSTSAWTPSSTTSRPDIK) are disordered. Residues 130 to 141 (STSAWTPSSTTS) are compositionally biased toward low complexity. The region spanning 172–234 (EMRKIKQEQG…KNTNVRLKDT (63 aa)) is the t-SNARE coiled-coil homology domain. Residues 244 to 264 (FCIDIVLLCIVLGIAAYLYNV) form a helical; Anchor for type IV membrane protein membrane-spanning segment. Residues 265-266 (LK) lie on the Vesicular side of the membrane.

It belongs to the syntaxin family. In terms of assembly, part of the t-SNARE complex. As to expression, expressed in root, leaf, stem, flower and silique.

It is found in the membrane. Vesicle trafficking protein that functions in the secretory pathway. The sequence is that of Syntaxin-71 (SYP71) from Arabidopsis thaliana (Mouse-ear cress).